We begin with the raw amino-acid sequence, 680 residues long: Probable galacturonosyltransferase 3 (680 aa).

At 1-6 (MTTFST) the chain is on the cytoplasmic side. Residues 7–27 (CAAFLSLVVVLHAVHVGGAIL) form a helical; Signal-anchor for type II membrane protein membrane-spanning segment. The Lumenal portion of the chain corresponds to 28–680 (ESQAPHRELK…PYLRRCDINE (653 aa)). A disordered region spans residues 118–146 (SFQNDTGMEDNASHSTTNQTDESENQFPN). Residues Asn-121, Asn-128, Asn-135, Asn-239, Asn-386, Asn-438, Asn-545, Asn-578, Asn-610, and Asn-631 are each glycosylated (N-linked (GlcNAc...) asparagine). The span at 130-145 (SHSTTNQTDESENQFP) shows a compositional bias: polar residues.

The protein belongs to the glycosyltransferase 8 family. In terms of tissue distribution, expressed in roots, inflorescences, siliques, leaves and stems.

The protein resides in the golgi apparatus membrane. The protein operates within glycan metabolism; pectin biosynthesis. Functionally, may be involved in pectin and/or xylans biosynthesis in cell walls. This chain is Probable galacturonosyltransferase 3 (GAUT3), found in Arabidopsis thaliana (Mouse-ear cress).